Reading from the N-terminus, the 215-residue chain is Ependymin (215 aa).

Positions 1–20 (MHTVKLLCVVFSCLCAVAWA) are cleaved as a signal peptide. N-linked (GlcNAc...) asparagine glycosylation is found at Asn71 and Asn94.

Belongs to the ependymin family. Forms disulfide-linked dimers. In terms of processing, binds calcium through the terminal sialic acids. EPDs are synthesized in the meninx and secreted in the cerebrospinal fluid.

The protein resides in the secreted. Functionally, may play a role in neural plasticity. May be involved during axon regeneration. This chain is Ependymin (epd), found in Cyprinus carpio (Common carp).